The primary structure comprises 384 residues: 8-amino-7-oxononanoate synthase (384 aa).

R21 serves as a coordination point for substrate. Residue 108–109 coordinates pyridoxal 5'-phosphate; that stretch reads GF. Substrate is bound at residue H133. Pyridoxal 5'-phosphate contacts are provided by S179, H207, and T233. An N6-(pyridoxal phosphate)lysine modification is found at K236. Position 352 (T352) interacts with substrate.

Belongs to the class-II pyridoxal-phosphate-dependent aminotransferase family. BioF subfamily. Homodimer. Pyridoxal 5'-phosphate serves as cofactor.

The catalysed reaction is 6-carboxyhexanoyl-[ACP] + L-alanine + H(+) = (8S)-8-amino-7-oxononanoate + holo-[ACP] + CO2. It participates in cofactor biosynthesis; biotin biosynthesis. In terms of biological role, catalyzes the decarboxylative condensation of pimeloyl-[acyl-carrier protein] and L-alanine to produce 8-amino-7-oxononanoate (AON), [acyl-carrier protein], and carbon dioxide. In Escherichia coli (strain K12 / DH10B), this protein is 8-amino-7-oxononanoate synthase.